We begin with the raw amino-acid sequence, 67 residues long: Large ribosomal subunit protein uL30 (67 aa).

The protein belongs to the universal ribosomal protein uL30 family. Part of the 50S ribosomal subunit.

The protein is Large ribosomal subunit protein uL30 of Thermotoga neapolitana (strain ATCC 49049 / DSM 4359 / NBRC 107923 / NS-E).